The following is an 84-amino-acid chain: Large ribosomal subunit protein bL27 (84 aa).

The segment covering 1-11 (MATTKAGGSTK) has biased composition (polar residues). Residues 1 to 20 (MATTKAGGSTKNGRDSHSKR) form a disordered region.

This sequence belongs to the bacterial ribosomal protein bL27 family.

The chain is Large ribosomal subunit protein bL27 from Mycoplasmopsis synoviae (strain 53) (Mycoplasma synoviae).